The sequence spans 255 residues: MAVISMKQLLEAGVHFGHQTRRWNPKMAKYIFTERNGIHVIDLQQTVKLADQAYEFVRDAAANDAVILFVGTKKQAAEAVADEATRAGQYFINHRWLGGTLTNWGTIQKRIARLKEIKRMEEEGTFDVLPKKEVALLNKQRARLEKFLGGIEDMPRIPDVMYVVDPHKEQIAVKEAKKLGIPVVAMVDTNADPDDIDIIIPANDDAIRAVKLITAKLADAIIEGRQGEDADVAFEADIQADSIEEIVEVVEGDNA.

It belongs to the universal ribosomal protein uS2 family.

The polypeptide is Small ribosomal subunit protein uS2 (Streptococcus pyogenes serotype M28 (strain MGAS6180)).